Reading from the N-terminus, the 130-residue chain is Small ribosomal subunit protein uS8 (130 aa).

Belongs to the universal ribosomal protein uS8 family. Part of the 30S ribosomal subunit.

In terms of biological role, one of the primary rRNA binding proteins, it binds directly to 16S rRNA central domain where it helps coordinate assembly of the platform of the 30S subunit. The protein is Small ribosomal subunit protein uS8 of Methanococcus maripaludis (strain C6 / ATCC BAA-1332).